Here is a 290-residue protein sequence, read N- to C-terminus: S-methyl-5'-thioadenosine phosphorylase (290 aa).

Phosphate-binding positions include Ser-11, 53-54, and 86-87; these read RH and SA. Met-184 provides a ligand contact to substrate. Residue Thr-185 coordinates phosphate. Position 208–210 (208–210) interacts with substrate; the sequence is DYD.

Belongs to the PNP/MTAP phosphorylase family. MTAP subfamily. In terms of assembly, homohexamer. Dimer of a homotrimer.

The catalysed reaction is S-methyl-5'-thioadenosine + phosphate = 5-(methylsulfanyl)-alpha-D-ribose 1-phosphate + adenine. The protein operates within amino-acid biosynthesis; L-methionine biosynthesis via salvage pathway; S-methyl-5-thio-alpha-D-ribose 1-phosphate from S-methyl-5'-thioadenosine (phosphorylase route): step 1/1. Functionally, catalyzes the reversible phosphorylation of S-methyl-5'-thioadenosine (MTA) to adenine and 5-methylthioribose-1-phosphate. Involved in the breakdown of MTA, a major by-product of polyamine biosynthesis. Responsible for the first step in the methionine salvage pathway after MTA has been generated from S-adenosylmethionine. Has broad substrate specificity with 6-aminopurine nucleosides as preferred substrates. This chain is S-methyl-5'-thioadenosine phosphorylase, found in Cereibacter sphaeroides (strain ATCC 17023 / DSM 158 / JCM 6121 / CCUG 31486 / LMG 2827 / NBRC 12203 / NCIMB 8253 / ATH 2.4.1.) (Rhodobacter sphaeroides).